The primary structure comprises 146 residues: Hemoglobin subunit beta (146 aa).

One can recognise a Globin domain in the interval 2 to 146; sequence HWSAEEKQLI…VAHALARKYH (145 aa). Heme b contacts are provided by His-63 and His-92.

It belongs to the globin family. Heterotetramer of two alpha chains and two beta chains. In terms of tissue distribution, red blood cells.

Its function is as follows. Involved in oxygen transport from the lung to the various peripheral tissues. This chain is Hemoglobin subunit beta (HBB), found in Eudyptes chrysocome (Western rockhopper penguin).